The sequence spans 901 residues: Serine/threonine-protein kinase-like protein CR4 (901 aa).

The N-terminal stretch at 1 to 22 is a signal peptide; sequence MDIVPVVALCCCLVLLPSWAYG. Repeat copies occupy residues 31–66, 70–105, 123–158, 160–193, 201–234, 251–285, and 290–328. The interval 31-328 is 7 X 36 AA repeats; that stretch reads VSYGEDGPVF…PLALPMAVSP (298 aa). N-linked (GlcNAc...) asparagine glycosylation is found at Asn-149 and Asn-177. Residue Asn-280 is glycosylated (N-linked (GlcNAc...) asparagine). The stretch at 335–389 is one TNFR-Cys repeat; sequence SCSHGYYEYANHGEVGSGSKTCKPANSRLCLPCSVGCPDDSYESSPCNATADRVC. 3 disulfides stabilise this stretch: Cys-336–Cys-364, Cys-367–Cys-381, and Cys-371–Cys-389. Asn-382 carries N-linked (GlcNAc...) asparagine glycosylation. Residues 423-443 traverse the membrane as a helical segment; it reads IFVAEIAFAVILVFSVTAIAC. In terms of domain architecture, Protein kinase spans 504–781; the sequence is FSEDSQVGKG…KVTTALERAL (278 aa). ATP contacts are provided by residues 510–518 and Lys-532; that span reads VGKGSFSCV. Asp-633 acts as the Proton acceptor in catalysis. The interval 845 to 901 is disordered; that stretch reads VTSSQRRKSSASEADMDGRTTTDGRNVGSSIGDGLRSLEEEISPASPQENLYLQHNF. Over residues 889–901 the composition is skewed to polar residues; sequence ASPQENLYLQHNF.

This sequence belongs to the protein kinase superfamily. Ser/Thr protein kinase family. As to quaternary structure, homodimer. In terms of processing, autophosphorylated. In terms of tissue distribution, specifically expressed in the epidermal cells of paleas and lemmas.

The protein resides in the cell membrane. It is found in the endosome. The protein localises to the multivesicular body membrane. The catalysed reaction is L-seryl-[protein] + ATP = O-phospho-L-seryl-[protein] + ADP + H(+). It catalyses the reaction L-threonyl-[protein] + ATP = O-phospho-L-threonyl-[protein] + ADP + H(+). Its function is as follows. Receptor protein kinase. Could play a role in a differentiation signal. Controls formative cell division in meristems. Regulates epidermal cell differentiation in many organs. During floral organogenesis, required to maintain the interlocking of the palea and lemma, and fertility. Triggers culm elongation. This chain is Serine/threonine-protein kinase-like protein CR4, found in Oryza sativa subsp. japonica (Rice).